We begin with the raw amino-acid sequence, 647 residues long: DNA ligase (647 aa).

Residues 30–34 (DEEYD), 79–80 (SM), and E105 each bind NAD(+). K107 acts as the N6-AMP-lysine intermediate in catalysis. Residues R128, E162, and K301 each coordinate NAD(+). Zn(2+) is bound by residues C395, C398, C411, and C416. The 78-residue stretch at 570–647 (KSDGVIFGKT…ESAFNELVKE (78 aa)) folds into the BRCT domain.

Belongs to the NAD-dependent DNA ligase family. LigA subfamily. Requires Mg(2+) as cofactor. It depends on Mn(2+) as a cofactor.

The catalysed reaction is NAD(+) + (deoxyribonucleotide)n-3'-hydroxyl + 5'-phospho-(deoxyribonucleotide)m = (deoxyribonucleotide)n+m + AMP + beta-nicotinamide D-nucleotide.. DNA ligase that catalyzes the formation of phosphodiester linkages between 5'-phosphoryl and 3'-hydroxyl groups in double-stranded DNA using NAD as a coenzyme and as the energy source for the reaction. It is essential for DNA replication and repair of damaged DNA. This is DNA ligase from Campylobacter jejuni subsp. jejuni serotype O:2 (strain ATCC 700819 / NCTC 11168).